A 204-amino-acid chain; its full sequence is ATP-dependent Clp protease proteolytic subunit 1 (204 aa).

Catalysis depends on S97, which acts as the Nucleophile. H122 is an active-site residue.

This sequence belongs to the peptidase S14 family. As to quaternary structure, fourteen ClpP subunits assemble into 2 heptameric rings which stack back to back to give a disk-like structure with a central cavity, resembling the structure of eukaryotic proteasomes.

It is found in the cytoplasm. It catalyses the reaction Hydrolysis of proteins to small peptides in the presence of ATP and magnesium. alpha-casein is the usual test substrate. In the absence of ATP, only oligopeptides shorter than five residues are hydrolyzed (such as succinyl-Leu-Tyr-|-NHMec, and Leu-Tyr-Leu-|-Tyr-Trp, in which cleavage of the -Tyr-|-Leu- and -Tyr-|-Trp bonds also occurs).. Its function is as follows. Cleaves peptides in various proteins in a process that requires ATP hydrolysis. Has a chymotrypsin-like activity. Plays a major role in the degradation of misfolded proteins. This Nostoc sp. (strain PCC 7120 / SAG 25.82 / UTEX 2576) protein is ATP-dependent Clp protease proteolytic subunit 1.